A 126-amino-acid chain; its full sequence is Nascent polypeptide-associated complex protein (126 aa).

The 68-residue stretch at 10-77 (PRMMKQMQKM…AKKVAKAEEK (68 aa)) folds into the NAC-A/B domain.

The protein belongs to the NAC-alpha family. Homodimer. Interacts with the ribosome. Binds ribosomal RNA.

Contacts the emerging nascent chain on the ribosome. This is Nascent polypeptide-associated complex protein from Methanococcus maripaludis (strain C5 / ATCC BAA-1333).